The following is a 506-amino-acid chain: Histidine ammonia-lyase (506 aa).

A cross-link (5-imidazolinone (Ala-Gly)) is located at residues 143–145; that stretch reads ASG. Ser144 is subject to 2,3-didehydroalanine (Ser).

Belongs to the PAL/histidase family. In terms of processing, contains an active site 4-methylidene-imidazol-5-one (MIO), which is formed autocatalytically by cyclization and dehydration of residues Ala-Ser-Gly.

Its subcellular location is the cytoplasm. The catalysed reaction is L-histidine = trans-urocanate + NH4(+). Its pathway is amino-acid degradation; L-histidine degradation into L-glutamate; N-formimidoyl-L-glutamate from L-histidine: step 1/3. The chain is Histidine ammonia-lyase from Salmonella agona (strain SL483).